The sequence spans 124 residues: Small ribosomal subunit protein uS12 (124 aa).

The disordered stretch occupies residues 1 to 42; it reads MPTIQQLVRKGRRPKVNKTKSPALRGNPQQRGVCSRVYTTTP. Basic residues predominate over residues 9-18; that stretch reads RKGRRPKVNK. Polar residues predominate over residues 27–42; it reads NPQQRGVCSRVYTTTP. At D89 the chain carries 3-methylthioaspartic acid.

It belongs to the universal ribosomal protein uS12 family. Part of the 30S ribosomal subunit. Contacts proteins S8 and S17. May interact with IF1 in the 30S initiation complex.

Its function is as follows. With S4 and S5 plays an important role in translational accuracy. In terms of biological role, interacts with and stabilizes bases of the 16S rRNA that are involved in tRNA selection in the A site and with the mRNA backbone. Located at the interface of the 30S and 50S subunits, it traverses the body of the 30S subunit contacting proteins on the other side and probably holding the rRNA structure together. The combined cluster of proteins S8, S12 and S17 appears to hold together the shoulder and platform of the 30S subunit. This Tropheryma whipplei (strain TW08/27) (Whipple's bacillus) protein is Small ribosomal subunit protein uS12.